The primary structure comprises 267 residues: MVALSNALSRVFGSLAGYKFPSFIQKGINALYVKIFKIDLSEFEPLENYRSLNALFTRSLKKERPFDKSPNICIAPCDALITECAFLDNDSALQIKGMPYKAHELVGEINPLSPSFFYANFYLSPKDYHHYHAPCDLEILEARYFAGKLLPVNKPSLHKNNNLFVGNERVTLVAKDIQGNRLYFVAVGALNVGKMRFNFDKNIQTNAKARFTQTYSYNPPIKVKKGDNLGNFEMGSTIVLFIQNTAFKDLKEKNVKFGESIGEFHAN.

Active-site charge relay system; for autoendoproteolytic cleavage activity residues include Asp78, His132, and Ser236. The Schiff-base intermediate with substrate; via pyruvic acid; for decarboxylase activity role is filled by Ser236. At Ser236 the chain carries Pyruvic acid (Ser); by autocatalysis.

It belongs to the phosphatidylserine decarboxylase family. PSD-B subfamily. Prokaryotic type I sub-subfamily. Heterodimer of a large membrane-associated beta subunit and a small pyruvoyl-containing alpha subunit. Pyruvate serves as cofactor. Post-translationally, is synthesized initially as an inactive proenzyme. Formation of the active enzyme involves a self-maturation process in which the active site pyruvoyl group is generated from an internal serine residue via an autocatalytic post-translational modification. Two non-identical subunits are generated from the proenzyme in this reaction, and the pyruvate is formed at the N-terminus of the alpha chain, which is derived from the carboxyl end of the proenzyme. The autoendoproteolytic cleavage occurs by a canonical serine protease mechanism, in which the side chain hydroxyl group of the serine supplies its oxygen atom to form the C-terminus of the beta chain, while the remainder of the serine residue undergoes an oxidative deamination to produce ammonia and the pyruvoyl prosthetic group on the alpha chain. During this reaction, the Ser that is part of the protease active site of the proenzyme becomes the pyruvoyl prosthetic group, which constitutes an essential element of the active site of the mature decarboxylase.

The protein resides in the cell membrane. It carries out the reaction a 1,2-diacyl-sn-glycero-3-phospho-L-serine + H(+) = a 1,2-diacyl-sn-glycero-3-phosphoethanolamine + CO2. The protein operates within phospholipid metabolism; phosphatidylethanolamine biosynthesis; phosphatidylethanolamine from CDP-diacylglycerol: step 2/2. Its function is as follows. Catalyzes the formation of phosphatidylethanolamine (PtdEtn) from phosphatidylserine (PtdSer). The protein is Phosphatidylserine decarboxylase proenzyme of Helicobacter pylori (strain ATCC 700392 / 26695) (Campylobacter pylori).